The primary structure comprises 382 residues: Beta-lactamase CMY-1 (382 aa).

An N-terminal signal peptide occupies residues 1–23 (MQQRQSILWGAVATLMWAGLAHA). Residue serine 88 is the Acyl-ester intermediate of the active site. Positions 88, 144, 174, 176, and 363 each coordinate a beta-lactam.

This sequence belongs to the class-C beta-lactamase family.

It carries out the reaction a beta-lactam + H2O = a substituted beta-amino acid. With respect to regulation, inhibited by the beta-lactamase-blocking agent sulbactam. In terms of biological role, class C beta-lactamase which confers resistance to penicillins and cephalosporins. Has benzylpenicillin- and cefalotin-hydrolyzing activities. Has weak cefuroxime, cefotaxime, cefoxitin, imipenem and oxacillin-hydrolyzing activities. The chain is Beta-lactamase CMY-1 from Klebsiella pneumoniae.